A 220-amino-acid chain; its full sequence is Inner kinetochore subunit fta3 (220 aa).

The protein belongs to the CENP-H/MCM16 family. As to quaternary structure, component of the inner kinetochore constitutive centromere-associated network (CCAN) (also known as central kinetochore Sim4 complex in fission yeast), which is composed of at least cnl2, cnp3, cnp20, fta1, fta2, fta3, fta4, fta6, fta7, mal2, mhf1, mhf2, mis6, mis15, mis17, sim4 and wip1.

The protein localises to the nucleus. It is found in the chromosome. The protein resides in the centromere. Its subcellular location is the kinetochore. Component of the kinetochore, a multiprotein complex that assembles on centromeric DNA and attaches chromosomes to spindle microtubules, mediating chromosome segregation and sister chromatid segregation during meiosis and mitosis. Component of the inner kinetochore constitutive centromere-associated network (CCAN), which serves as a structural platform for outer kinetochore assembly. Fta2, fta3 and fta4 associate with the central core (cnt) and inner repeat (inr) region of the centromere. This Schizosaccharomyces pombe (strain 972 / ATCC 24843) (Fission yeast) protein is Inner kinetochore subunit fta3 (fta3).